A 220-amino-acid chain; its full sequence is Ribosomal RNA large subunit methyltransferase E (220 aa).

S-adenosyl-L-methionine-binding residues include G60, W62, D92, D108, and D133. K173 functions as the Proton acceptor in the catalytic mechanism. The interval 195 to 220 (APRKPKASRDKSSETFILGRHLKQPR) is disordered.

Belongs to the class I-like SAM-binding methyltransferase superfamily. RNA methyltransferase RlmE family.

Its subcellular location is the cytoplasm. It carries out the reaction uridine(2552) in 23S rRNA + S-adenosyl-L-methionine = 2'-O-methyluridine(2552) in 23S rRNA + S-adenosyl-L-homocysteine + H(+). In terms of biological role, specifically methylates the uridine in position 2552 of 23S rRNA at the 2'-O position of the ribose in the fully assembled 50S ribosomal subunit. In Burkholderia pseudomallei (strain 1710b), this protein is Ribosomal RNA large subunit methyltransferase E.